Here is a 134-residue protein sequence, read N- to C-terminus: Histone-like protein Rv3852 (134 aa).

A compositionally biased stretch (basic and acidic residues) spans 1 to 10 (MPDPQDRPDS). Positions 1–68 (MPDPQDRPDS…PAEAPVSLQQ (68 aa)) are disordered. The span at 23 to 48 (LPAKKAAKKAPARKTPAKKAPAKKTP) shows a compositional bias: basic residues. The helical transmembrane segment at 111–128 (PVPLIVAVTLSLLALLLI) threads the bilayer.

As to quaternary structure, homodimer in solution. Is probably able to self-associate in higher oligomers along the DNA molecules. Interacts with the N-terminal region of Wag31.

The protein localises to the cell inner membrane. Its activity is regulated as follows. Can interact directly in vitro with the compound agrimophol, a phloroglucinol from the A.pilosa plant, whose extracts have been used in traditional Chinese medicine to treat pulmonary infections. Interaction with agrimophol leads to disruption of Rv3852's DNA binding function. In terms of biological role, binds DNA in vitro. It has been proposed that Rv3852 plays a role in nucleoid organization and may function as an anchorage to tether the DNA to the membrane. However, it was later shown that it has no influence on nucleoid shape or compaction. It plays no role in virulence and only a minor role in the control of transcription, and does not appear to function as a typical nucleoid-associated protein. Interacts with Wag31, an important cell shape and cell wall integrity determinant, and facilitates the localization of Wag31 to the cell poles and the cell wall, thus enabling nascent peptidoglycan synthesis. This Mycobacterium tuberculosis (strain ATCC 25618 / H37Rv) protein is Histone-like protein Rv3852.